We begin with the raw amino-acid sequence, 167 residues long: Arginine repressor (167 aa).

The protein belongs to the ArgR family.

Its subcellular location is the cytoplasm. The protein operates within amino-acid biosynthesis; L-arginine biosynthesis [regulation]. Functionally, regulates arginine biosynthesis genes. The sequence is that of Arginine repressor from Mycobacterium leprae (strain Br4923).